The primary structure comprises 279 residues: Very long chain fatty acid elongase 2 (279 aa).

Transmembrane regions (helical) follow at residues 12 to 32 (WFLL…LLSI), 50 to 70 (ILTL…VELV), 98 to 118 (VLWW…FFVL), 136 to 156 (MFNI…FFGP), 158 to 178 (LNSF…FPSM), 188 to 208 (LTQA…SAVV), and 213 to 233 (FPFG…ILFL). The Di-lysine motif motif lies at 276 to 279 (KKVQ).

It belongs to the ELO family. ELOVL2 subfamily. Interacts with TECR.

The protein localises to the endoplasmic reticulum membrane. It catalyses the reaction a very-long-chain acyl-CoA + malonyl-CoA + H(+) = a very-long-chain 3-oxoacyl-CoA + CO2 + CoA. The catalysed reaction is (7Z,10Z,13Z,16Z,19Z)-docosapentaenoyl-CoA + malonyl-CoA + H(+) = (9Z,12Z,15Z,18Z,21Z)-3-oxotetracosapentaenoyl-CoA + CO2 + CoA. It carries out the reaction (5Z,8Z,11Z,14Z,17Z)-eicosapentaenoyl-CoA + malonyl-CoA + H(+) = 3-oxo-(7Z,10Z,13Z,16Z,19Z)-docosapentaenoyl-CoA + CO2 + CoA. The enzyme catalyses (5Z,8Z,11Z,14Z)-eicosatetraenoyl-CoA + malonyl-CoA + H(+) = (7Z,10Z,13Z,16Z)-3-oxodocosatetraenoyl-CoA + CO2 + CoA. It catalyses the reaction (7Z,10Z,13Z,16Z)-docosatetraenoyl-CoA + malonyl-CoA + H(+) = (9Z,12Z,15Z,18Z)-3-oxotetracosatetraenoyl-CoA + CO2 + CoA. It functions in the pathway lipid metabolism; polyunsaturated fatty acid biosynthesis. Its function is as follows. Catalyzes the first and rate-limiting reaction of the four reactions that constitute the long-chain fatty acids elongation cycle. This endoplasmic reticulum-bound enzymatic process allows the addition of 2 carbons to the chain of long- and very long-chain fatty acids (VLCFAs) per cycle. Condensing enzyme that catalyzes the synthesis of polyunsaturated very long chain fatty acid (C20- and C22-PUFA), acting specifically toward polyunsaturated acyl-CoA with the higher activity toward C20:4(n-6) acyl-CoA. May participate in the production of polyunsaturated VLCFAs of different chain lengths that are involved in multiple biological processes as precursors of membrane lipids and lipid mediators. This is Very long chain fatty acid elongase 2 from Rattus norvegicus (Rat).